We begin with the raw amino-acid sequence, 130 residues long: Large ribosomal subunit protein bL21 (130 aa).

The tract at residues 110–130 (KTAAQPAADEAVAANEVDSEA) is disordered. Over residues 112-130 (AAQPAADEAVAANEVDSEA) the composition is skewed to low complexity.

Belongs to the bacterial ribosomal protein bL21 family. In terms of assembly, part of the 50S ribosomal subunit. Contacts protein L20.

Its function is as follows. This protein binds to 23S rRNA in the presence of protein L20. In Cyanothece sp. (strain PCC 7425 / ATCC 29141), this protein is Large ribosomal subunit protein bL21.